The following is a 315-amino-acid chain: Homoserine kinase (315 aa).

Position 97-107 (97-107 (PPARGLGSSAT)) interacts with ATP.

This sequence belongs to the GHMP kinase family. Homoserine kinase subfamily.

Its subcellular location is the cytoplasm. It carries out the reaction L-homoserine + ATP = O-phospho-L-homoserine + ADP + H(+). The protein operates within amino-acid biosynthesis; L-threonine biosynthesis; L-threonine from L-aspartate: step 4/5. Catalyzes the ATP-dependent phosphorylation of L-homoserine to L-homoserine phosphate. In Synechococcus sp. (strain WH7803), this protein is Homoserine kinase.